A 575-amino-acid polypeptide reads, in one-letter code: Phosphoenolpyruvate-protein phosphotransferase (575 aa).

His191 serves as the catalytic Tele-phosphohistidine intermediate. Residues Arg298 and Arg334 each contribute to the phosphoenolpyruvate site. Residues Glu435 and Asp459 each contribute to the Mg(2+) site. Residues 458–459 (ND) and Arg469 each bind phosphoenolpyruvate. The Proton donor role is filled by Cys506.

The protein belongs to the PEP-utilizing enzyme family. In terms of assembly, homodimer. Mg(2+) is required as a cofactor.

The protein localises to the cytoplasm. The enzyme catalyses L-histidyl-[protein] + phosphoenolpyruvate = N(pros)-phospho-L-histidyl-[protein] + pyruvate. Functionally, general (non sugar-specific) component of the phosphoenolpyruvate-dependent sugar phosphotransferase system (sugar PTS). This major carbohydrate active-transport system catalyzes the phosphorylation of incoming sugar substrates concomitantly with their translocation across the cell membrane. Enzyme I transfers the phosphoryl group from phosphoenolpyruvate (PEP) to the phosphoryl carrier protein (HPr). This Lactococcus lactis subsp. cremoris (Streptococcus cremoris) protein is Phosphoenolpyruvate-protein phosphotransferase (ptsI).